A 136-amino-acid chain; its full sequence is Thiosulfate sulfurtransferase 18 (136 aa).

The region spanning 26–128 (LQSGHQYLDV…WVDHSFPINT (103 aa)) is the Rhodanese domain. Cys-88 (cysteine persulfide intermediate) is an active-site residue.

Its subcellular location is the cytoplasm. The catalysed reaction is thiosulfate + hydrogen cyanide = thiocyanate + sulfite + 2 H(+). In terms of biological role, catalyzes the transfer of a sulfur ion from a donor to cyanide or to other thiol compounds. Substrate preference is thiosulfate &gt; 3-mercaptopyruvate. This chain is Thiosulfate sulfurtransferase 18 (STR18), found in Arabidopsis thaliana (Mouse-ear cress).